The primary structure comprises 240 residues: Proline-rich antigen homolog (240 aa).

Pro residues-rich tracts occupy residues 1–31 (MTEQ…PAAP) and 38–78 (APPP…PPGP). Residues 1 to 78 (MTEQPPPGGS…GGYAPPPPGP (78 aa)) form a disordered region. The RDD domain maps to 89–233 (TPWITRVLAA…KRQTLADKIM (145 aa)). Helical transmembrane passes span 98 to 118 (AFID…IMLV), 142 to 162 (SMIG…YLVW), and 203 to 223 (LAHF…LWDA).

This sequence belongs to the mycobacterial Pra family.

Its subcellular location is the cell membrane. This is Proline-rich antigen homolog from Mycobacterium tuberculosis (strain CDC 1551 / Oshkosh).